Reading from the N-terminus, the 191-residue chain is Thymidine kinase (191 aa).

Residues 9–16 (GSMNSGKT) and 85–88 (DESQ) each bind ATP. Glu-86 acts as the Proton acceptor in catalysis. Cys-143, Cys-146, Cys-181, and Cys-184 together coordinate Zn(2+).

The protein belongs to the thymidine kinase family. As to quaternary structure, homotetramer.

It is found in the cytoplasm. It catalyses the reaction thymidine + ATP = dTMP + ADP + H(+). In Listeria monocytogenes serotype 4b (strain F2365), this protein is Thymidine kinase.